Consider the following 132-residue polypeptide: Small ribosomal subunit protein uS9 (132 aa).

It belongs to the universal ribosomal protein uS9 family.

This is Small ribosomal subunit protein uS9 from Blochmanniella pennsylvanica (strain BPEN).